The sequence spans 146 residues: Envelope protein OPG155 (146 aa).

Residues 1-21 (MNSLSIFFIVVATAAVCLLFI) traverse the membrane as a helical; Signal-anchor for type III membrane protein segment. The Intravirion segment spans residues 22–146 (QGYSIYENYG…VECQFLKSVL (125 aa)).

It belongs to the orthopoxvirus OPG155 protein family. In terms of assembly, part of a stable entry-fusion complex (EFC) which is at least composed of proteins OPG143, OPG147, OPG155, OPG086, OPG094, OPG107, OPG104, and OPG099. Formation of the viral membrane is necessary for the assembly of the complex. Interacts directly with protein OPG107. In terms of processing, contains two intramolecular disulfide bonds. They are created by the viral disulfide bond formation pathway, a poxvirus-specific pathway that operates on the cytoplasmic side of the MV membranes.

The protein resides in the virion membrane. In terms of biological role, envelope protein required for virus entry into host cell and for cell-cell fusion (syncytium formation). This chain is Envelope protein OPG155 (OPG155), found in Variola virus (isolate Human/India/Ind3/1967) (VARV).